We begin with the raw amino-acid sequence, 431 residues long: Adenylosuccinate synthetase (431 aa).

Residues 13–19 and 41–43 contribute to the GTP site; these read GDEGKGK and GHT. D14 functions as the Proton acceptor in the catalytic mechanism. Positions 14 and 41 each coordinate Mg(2+). Residues 14–17, 39–42, T130, R144, Q225, T240, and R304 each bind IMP; these read DEGK and NAGH. H42 serves as the catalytic Proton donor. A substrate-binding site is contributed by 300 to 306; that stretch reads ATTGRAR. Residues R306, 332-334, and 415-417 contribute to the GTP site; these read KLD and STG.

It belongs to the adenylosuccinate synthetase family. Homodimer. It depends on Mg(2+) as a cofactor.

It localises to the cytoplasm. The catalysed reaction is IMP + L-aspartate + GTP = N(6)-(1,2-dicarboxyethyl)-AMP + GDP + phosphate + 2 H(+). Its pathway is purine metabolism; AMP biosynthesis via de novo pathway; AMP from IMP: step 1/2. In terms of biological role, plays an important role in the de novo pathway of purine nucleotide biosynthesis. Catalyzes the first committed step in the biosynthesis of AMP from IMP. The protein is Adenylosuccinate synthetase of Ectopseudomonas mendocina (strain ymp) (Pseudomonas mendocina).